Here is a 592-residue protein sequence, read N- to C-terminus: Arginine--tRNA ligase (592 aa).

Positions 139–149 (ANPNGPLHIGH) match the 'HIGH' region motif.

The protein belongs to the class-I aminoacyl-tRNA synthetase family.

It localises to the cytoplasm. The catalysed reaction is tRNA(Arg) + L-arginine + ATP = L-arginyl-tRNA(Arg) + AMP + diphosphate. The chain is Arginine--tRNA ligase from Methanopyrus kandleri (strain AV19 / DSM 6324 / JCM 9639 / NBRC 100938).